Consider the following 345-residue polypeptide: Anthranilate phosphoribosyltransferase (345 aa).

5-phospho-alpha-D-ribose 1-diphosphate contacts are provided by residues 77–79 (TAG), 82–83 (GD), threonine 87, 89–92 (NVST), 106–114 (KHGNRAVSG), and serine 118. Glycine 79 lines the anthranilate pocket. Serine 91 contributes to the Mg(2+) binding site. Asparagine 109 is a binding site for anthranilate. Arginine 164 lines the anthranilate pocket. Mg(2+) is bound by residues aspartate 223 and glutamate 224.

Belongs to the anthranilate phosphoribosyltransferase family. Homodimer. Requires Mg(2+) as cofactor.

It catalyses the reaction N-(5-phospho-beta-D-ribosyl)anthranilate + diphosphate = 5-phospho-alpha-D-ribose 1-diphosphate + anthranilate. It functions in the pathway amino-acid biosynthesis; L-tryptophan biosynthesis; L-tryptophan from chorismate: step 2/5. Catalyzes the transfer of the phosphoribosyl group of 5-phosphorylribose-1-pyrophosphate (PRPP) to anthranilate to yield N-(5'-phosphoribosyl)-anthranilate (PRA). This is Anthranilate phosphoribosyltransferase from Saccharolobus solfataricus (strain ATCC 35092 / DSM 1617 / JCM 11322 / P2) (Sulfolobus solfataricus).